The sequence spans 184 residues: Orotate phosphoribosyltransferase (184 aa).

Residues Arg99, Lys100, Lys103, His105, and 125–133 contribute to the 5-phospho-alpha-D-ribose 1-diphosphate site; that span reads EDTTTTGNS. Residues Thr129 and Arg157 each coordinate orotate.

It belongs to the purine/pyrimidine phosphoribosyltransferase family. PyrE subfamily. In terms of assembly, homodimer. It depends on Mg(2+) as a cofactor.

It carries out the reaction orotidine 5'-phosphate + diphosphate = orotate + 5-phospho-alpha-D-ribose 1-diphosphate. It participates in pyrimidine metabolism; UMP biosynthesis via de novo pathway; UMP from orotate: step 1/2. Its function is as follows. Catalyzes the transfer of a ribosyl phosphate group from 5-phosphoribose 1-diphosphate to orotate, leading to the formation of orotidine monophosphate (OMP). This Corynebacterium glutamicum (strain R) protein is Orotate phosphoribosyltransferase.